The sequence spans 409 residues: Tyrosine--tRNA ligase (409 aa).

Tyrosine 35 serves as a coordination point for L-tyrosine. The 'HIGH' region signature appears at 40-49 (CTAESLHVGS). Residues tyrosine 172 and glutamine 176 each coordinate L-tyrosine. Residues 232–236 (KMGKT) carry the 'KMSKS' region motif. Lysine 235 is an ATP binding site. The S4 RNA-binding domain occupies 343–409 (ISILDLVILS…KKKHIKVELI (67 aa)).

The protein belongs to the class-I aminoacyl-tRNA synthetase family. TyrS type 1 subfamily. In terms of assembly, homodimer.

Its subcellular location is the cytoplasm. It carries out the reaction tRNA(Tyr) + L-tyrosine + ATP = L-tyrosyl-tRNA(Tyr) + AMP + diphosphate + H(+). Functionally, catalyzes the attachment of tyrosine to tRNA(Tyr) in a two-step reaction: tyrosine is first activated by ATP to form Tyr-AMP and then transferred to the acceptor end of tRNA(Tyr). The polypeptide is Tyrosine--tRNA ligase (Pelagibacter ubique (strain HTCC1062)).